Consider the following 327-residue polypeptide: MATAMTVSSKLRGLLMQQLRGTSQLYFNISLRSLSSSAQEASKRAPEEVSDHNYESIQVTSAQKHVLHVQLNRPEKRNAMNRAFWRELVECFQKISKDSDCRAVVVSGAGKMFTSGIDLMDMASELMQPSGDDAARIAWYLRDLISKYQKTFTVIEKCPKPVIAAIHGGCIGGGVDLVSACDIRYCTQDAFFQIKEVDMGLAADVGTLQRLPKVIGNQSLVNELTFSARKMMADEALDSGLVSRVFQDKDAMLNAAFALAADISSKSPVAVQGSKINLIYSRDHSVDESLDYMATWNMSMLQTQDIIKSVQAAMEKRDTKSITFSKL.

Residues 1 to 33 (MATAMTVSSKLRGLLMQQLRGTSQLYFNISLRS) constitute a mitochondrion transit peptide. Residue 115–119 (SGIDL) coordinates substrate. Lys147 carries the N6-acetyllysine modification. Substrate is bound at residue Gly173. Lys230 carries the post-translational modification N6-succinyllysine. Residue Ser267 is modified to Phosphoserine. Lys316 bears the N6-succinyllysine mark. Residues 325–327 (SKL) carry the Microbody targeting signal motif. The residue at position 326 (Lys326) is an N6-acetyllysine.

The protein belongs to the enoyl-CoA hydratase/isomerase family. Homohexamer.

The protein localises to the mitochondrion. Its subcellular location is the peroxisome. It carries out the reaction (3E,5Z)-octadienoyl-CoA = (2E,4E)-octadienoyl-CoA. The catalysed reaction is (3E,5Z,8Z,11Z,14Z)-eicosapentaenoyl-CoA = (2E,4E,8Z,11Z,14Z)-eicosapentaenoyl-CoA. Its pathway is lipid metabolism; fatty acid beta-oxidation. Isomerization of 3-trans,5-cis-dienoyl-CoA to 2-trans,4-trans-dienoyl-CoA. In Mus musculus (Mouse), this protein is Delta(3,5)-Delta(2,4)-dienoyl-CoA isomerase, mitochondrial.